The primary structure comprises 182 residues: Mid1-interacting protein 1 (182 aa).

Residue Met1 is modified to N-acetylmethionine. The interval 55–75 (VGGSGGCLEERTTPAPSPGSA) is disordered. Residues Ser71, Ser74, and Ser78 each carry the phosphoserine modification.

It belongs to the SPOT14 family. As to quaternary structure, homodimer in the absence of THRSP. Heterodimer with THRSP. The homodimer interacts with ACACA and ACACB. Promotes polymerization of Acetyl-CoA carboxylase to form complexes that contain MID1IP1 and ACACA and/or ACACB. Interaction with THRSP interferes with ACACA binding. As to expression, during embryonic development, expressed mainly in the neuroepithelial midline, urogenital apparatus and digits. Detected in adult white fat, liver, heart, brain and kidney. Expressed at very low levels in lactating mammary gland.

It is found in the nucleus. The protein resides in the cytoplasm. It localises to the cytoskeleton. Plays a role in the regulation of lipogenesis in liver. Up-regulates ACACA enzyme activity. Required for efficient lipid biosynthesis, including triacylglycerol, diacylglycerol and phospholipid. Involved in stabilization of microtubules. The sequence is that of Mid1-interacting protein 1 (Mid1ip1) from Mus musculus (Mouse).